The chain runs to 501 residues: Glycerol kinase (501 aa).

ADP is bound at residue T14. T14, T15, and S16 together coordinate ATP. T14 lines the sn-glycerol 3-phosphate pocket. R18 is a binding site for ADP. Residues R84, E85, Y135, and D244 each coordinate sn-glycerol 3-phosphate. Glycerol contacts are provided by R84, E85, Y135, D244, and Q245. Residues T266 and G309 each coordinate ADP. 4 residues coordinate ATP: T266, G309, Q313, and G410. Residues G410 and N414 each contribute to the ADP site.

The protein belongs to the FGGY kinase family.

The enzyme catalyses glycerol + ATP = sn-glycerol 3-phosphate + ADP + H(+). The protein operates within polyol metabolism; glycerol degradation via glycerol kinase pathway; sn-glycerol 3-phosphate from glycerol: step 1/1. Its activity is regulated as follows. Inhibited by fructose 1,6-bisphosphate (FBP). Its function is as follows. Key enzyme in the regulation of glycerol uptake and metabolism. Catalyzes the phosphorylation of glycerol to yield sn-glycerol 3-phosphate. This Deinococcus radiodurans (strain ATCC 13939 / DSM 20539 / JCM 16871 / CCUG 27074 / LMG 4051 / NBRC 15346 / NCIMB 9279 / VKM B-1422 / R1) protein is Glycerol kinase.